A 957-amino-acid polypeptide reads, in one-letter code: SH3 domain-binding protein 4-B (957 aa).

The SH3 1 domain occupies 54–113; it reads ENVKEVVAIKDYCPNNFTTLKFSKGEHLYVLDASGGDWWYAHNTTEMGYIPSSYVQPLNY. The ZU5 domain occupies 312–449; it reads TSIVCRLDSS…LEPVMYVVMV (138 aa). The SH3 2 domain occupies 649-719; the sequence is TSLKYGKLIK…HAKNVLVVGK (71 aa).

As to quaternary structure, homodimer or homooligomer.

It is found in the membrane. The protein resides in the clathrin-coated pit. Its subcellular location is the cytoplasmic vesicle. The protein localises to the clathrin-coated vesicle. It localises to the nucleus. Possible role in regulating endocytosis of the transferrin receptor at the plasma membrane. Alternatively, may function as a negative regulator of the amino acid-induced TOR signaling by inhibiting the formation of active Rag GTPase complexes. Preferentially binds inactive Rag GTPase complexes and prevents their interaction with the mTORC1 complex inhibiting its relocalization to lysosomes and its activation. Thereby, may indirectly regulate cell growth, proliferation and autophagy. The protein is SH3 domain-binding protein 4-B (sh3bp4-b) of Xenopus laevis (African clawed frog).